Consider the following 221-residue polypeptide: Putative gene 53 protein (221 aa).

The sequence is that of Putative gene 53 protein (53) from Bacillus phage SP01 (Bacteriophage SP01).